Consider the following 338-residue polypeptide: Holliday junction branch migration complex subunit RuvB (338 aa).

A large ATPase domain (RuvB-L) region spans residues 1-181 (MTTRTISPEK…FGVISRLEFY (181 aa)). ATP-binding positions include Leu20, Arg21, Gly62, Lys65, Thr66, Thr67, 128–130 (EDF), Arg171, Tyr181, and Arg218. Thr66 serves as a coordination point for Mg(2+). The tract at residues 182–252 (TDAELSTIVT…VVDESLKLLE (71 aa)) is small ATPAse domain (RuvB-S). The segment at 255–338 (EKGFDQMDRT…APAPGQGALF (84 aa)) is head domain (RuvB-H). Positions 291, 310, and 315 each coordinate DNA.

The protein belongs to the RuvB family. Homohexamer. Forms an RuvA(8)-RuvB(12)-Holliday junction (HJ) complex. HJ DNA is sandwiched between 2 RuvA tetramers; dsDNA enters through RuvA and exits via RuvB. An RuvB hexamer assembles on each DNA strand where it exits the tetramer. Each RuvB hexamer is contacted by two RuvA subunits (via domain III) on 2 adjacent RuvB subunits; this complex drives branch migration. In the full resolvosome a probable DNA-RuvA(4)-RuvB(12)-RuvC(2) complex forms which resolves the HJ.

It localises to the cytoplasm. It catalyses the reaction ATP + H2O = ADP + phosphate + H(+). In terms of biological role, the RuvA-RuvB-RuvC complex processes Holliday junction (HJ) DNA during genetic recombination and DNA repair, while the RuvA-RuvB complex plays an important role in the rescue of blocked DNA replication forks via replication fork reversal (RFR). RuvA specifically binds to HJ cruciform DNA, conferring on it an open structure. The RuvB hexamer acts as an ATP-dependent pump, pulling dsDNA into and through the RuvAB complex. RuvB forms 2 homohexamers on either side of HJ DNA bound by 1 or 2 RuvA tetramers; 4 subunits per hexamer contact DNA at a time. Coordinated motions by a converter formed by DNA-disengaged RuvB subunits stimulates ATP hydrolysis and nucleotide exchange. Immobilization of the converter enables RuvB to convert the ATP-contained energy into a lever motion, pulling 2 nucleotides of DNA out of the RuvA tetramer per ATP hydrolyzed, thus driving DNA branch migration. The RuvB motors rotate together with the DNA substrate, which together with the progressing nucleotide cycle form the mechanistic basis for DNA recombination by continuous HJ branch migration. Branch migration allows RuvC to scan DNA until it finds its consensus sequence, where it cleaves and resolves cruciform DNA. The sequence is that of Holliday junction branch migration complex subunit RuvB from Geobacter sulfurreducens (strain ATCC 51573 / DSM 12127 / PCA).